A 235-amino-acid chain; its full sequence is Small ribosomal subunit protein uS3 (235 aa).

One can recognise a KH type-2 domain in the interval 39-107 (IREILHKELK…DVVINIVEIR (69 aa)). The tract at residues 215-235 (QDKRMAESDGGGSSRPRRDAA) is disordered.

Belongs to the universal ribosomal protein uS3 family. Part of the 30S ribosomal subunit. Forms a tight complex with proteins S10 and S14.

Functionally, binds the lower part of the 30S subunit head. Binds mRNA in the 70S ribosome, positioning it for translation. In Rhodopseudomonas palustris (strain TIE-1), this protein is Small ribosomal subunit protein uS3.